Here is a 417-residue protein sequence, read N- to C-terminus: Serine hydroxymethyltransferase 3 (417 aa).

Residues Leu-121 and 125–127 (GHL) each bind (6S)-5,6,7,8-tetrahydrofolate. Lys-229 carries the post-translational modification N6-(pyridoxal phosphate)lysine. 354–356 (SPF) serves as a coordination point for (6S)-5,6,7,8-tetrahydrofolate.

This sequence belongs to the SHMT family. Homodimer. The cofactor is pyridoxal 5'-phosphate.

It is found in the cytoplasm. The catalysed reaction is (6R)-5,10-methylene-5,6,7,8-tetrahydrofolate + glycine + H2O = (6S)-5,6,7,8-tetrahydrofolate + L-serine. The protein operates within one-carbon metabolism; tetrahydrofolate interconversion. Its pathway is amino-acid biosynthesis; glycine biosynthesis; glycine from L-serine: step 1/1. Functionally, catalyzes the reversible interconversion of serine and glycine with tetrahydrofolate (THF) serving as the one-carbon carrier. This reaction serves as the major source of one-carbon groups required for the biosynthesis of purines, thymidylate, methionine, and other important biomolecules. Also exhibits THF-independent aldolase activity toward beta-hydroxyamino acids, producing glycine and aldehydes, via a retro-aldol mechanism. The chain is Serine hydroxymethyltransferase 3 from Pseudomonas aeruginosa (strain ATCC 15692 / DSM 22644 / CIP 104116 / JCM 14847 / LMG 12228 / 1C / PRS 101 / PAO1).